A 286-amino-acid polypeptide reads, in one-letter code: Apoptosis inhibitor 1 (286 aa).

BIR repeat units lie at residues 29–96 (LIER…CAYA) and 131–199 (LQSR…CYFV). Residues cysteine 169, cysteine 172, histidine 189, and cysteine 196 each contribute to the Zn(2+) site. The RING-type zinc-finger motif lies at 238-274 (CKVCLERQRDAVLMPCRHFCVCVQCYFGLDQKCPTCR).

Acts by blocking cellular apoptosis early in infection. Later, stimulates caspase-3-like protease activity and induces apoptosis, probably to favor the release of occluded virions. This chain is Apoptosis inhibitor 1 (IAP1), found in Lepidoptera (butterflies and moths).